The sequence spans 302 residues: Sushi domain-containing protein 6 (302 aa).

An N-terminal signal peptide occupies residues 1–39; the sequence is MCHGKIAPKSSSEFVVTSVGHGVFLQLVILCALLGDGLA. Positions 40–104 constitute a Sushi domain; that stretch reads SVCPLPPEPE…TPAMEVSCHL (65 aa). Cystine bridges form between Cys42–Cys89 and Cys74–Cys102. Residues 120-140 form a helical membrane-spanning segment; it reads IVASTASSVALILLLVVLFVL. 2 disordered regions span residues 202–241 and 256–302; these read GSAPSGRNMPREQQLQGQEACSSAGGEDEAPGHSGLCEAW and TSSW…LKEA. Polar residues-rich tracts occupy residues 212 to 222, 256 to 267, and 279 to 290; these read REQQLQGQEAC, TSSWVAGSGSSR, and SDIQSLLSLTSE.

The protein localises to the membrane. In terms of biological role, may play a role in growth-suppressive activity and cell death. May be involved in the production of chemokine molecules in umbilical vein endothelial cells (HUVECs) cultured in THP1 monocyte LPS-induced medium. Plays a role in preventing tumor onset. The sequence is that of Sushi domain-containing protein 6 from Mus musculus (Mouse).